We begin with the raw amino-acid sequence, 446 residues long: Putrescine N-hydroxylase (446 aa).

FAD is bound by residues F17, D37, S38, K39, W44, and H45. NADP(+)-binding residues include T54, Q56, and R98. Q56 is an FAD binding site. V121 contacts FAD. NADP(+)-binding residues include S199, K223, Y267, and L301. N378, P389, and L391 together coordinate FAD.

Belongs to the lysine N(6)-hydroxylase/L-ornithine N(5)-oxygenase family. Homotetramer. It depends on FAD as a cofactor.

The catalysed reaction is putrescine + NADPH + O2 = N-hydroxyputrescine + NADP(+) + H2O. Its pathway is siderophore biosynthesis. In terms of biological role, N-hydroxylating monooxygenase involved in the biosynthesis of fimsbactin A, the major siderophore produced by A.baumannii. Catalyzes the N-hydroxylation of the aliphatic diamine putrescine into N-hydroxyputrescine (NHP). Putrescine is the preferred substrate, but the enzyme can also catalyze the N-hydroxylation of cadaverine, with 4-fold lower catalytic efficiency. Cannot use lysine or ornithine as substrates. Uses both NADPH and NADH as the reducing cofactor with a preference for NADPH. The chain is Putrescine N-hydroxylase from Acinetobacter baumannii (strain ATCC 17978 / DSM 105126 / CIP 53.77 / LMG 1025 / NCDC KC755 / 5377).